The chain runs to 510 residues: Nectin-4 (510 aa).

The first 31 residues, 1-31 (MPLSLGAEMWGPAAWLLLLLLLASFTGQRLA), serve as a signal peptide directing secretion. One can recognise an Ig-like V-type domain in the interval 32 to 144 (GELETSDLVT…GSFQARLRLR (113 aa)). The Extracellular segment spans residues 32–349 (GELETSDLVT…GKQVDLVSAS (318 aa)). 3 disulfide bridges follow: Cys-52–Cys-127, Cys-171–Cys-223, and Cys-270–Cys-315. Ig-like C2-type domains follow at residues 148–237 (PPLP…QRIT) and 248–331 (ASVR…VVVD). Residue Asn-281 is glycosylated (N-linked (GlcNAc...) asparagine). A helical transmembrane segment spans residues 350–370 (VVVVGVIAALLFCLLVVVVVL). Over 371–510 (MSRYHRRKAQ…IYINGRGHLV (140 aa)) the chain is Cytoplasmic. Over residues 400 to 412 (RLHSHHSDPRNQP) the composition is skewed to basic and acidic residues. The disordered stretch occupies residues 400-475 (RLHSHHSDPR…GRAEEEEDRD (76 aa)).

The protein belongs to the nectin family. Self-associates. Interacts via its Ig-like V-type domain with NECTIN1 Ig-like V-type domain. Interacts via its C-terminus with AFDN. Interacts with TIGIT.

The protein localises to the cell membrane. It localises to the cell junction. Its subcellular location is the adherens junction. In terms of biological role, seems to be involved in cell adhesion through trans-homophilic and -heterophilic interactions, the latter including specifically interactions with NECTIN1. Plays a role in the senescence-associated cell size enlargement via SFK/PI3K/Rac1 and thus promotes senescent cell survival. Also participates in the innate immune response by acting as a ligand for the receptor TIGIT to inhibit NK-cell activity. The sequence is that of Nectin-4 from Bos taurus (Bovine).